Consider the following 296-residue polypeptide: HVA22-like protein i (296 aa).

The disordered stretch occupies residues 146–296; the sequence is STPRPQPPQK…LRKTRSEESR (151 aa). The span at 180 to 193 shows a compositional bias: low complexity; the sequence is VSLSSSSSSSSSEN. Residues 223 to 233 show a composition bias toward polar residues; sequence AGTTQIAQKSV. The segment covering 251–261 has biased composition (acidic residues); sequence QIEEVEGEAES. Positions 270–281 are enriched in basic and acidic residues; the sequence is GPKETVMEETIR.

Belongs to the DP1 family.

In Arabidopsis thaliana (Mouse-ear cress), this protein is HVA22-like protein i (HVA22I).